We begin with the raw amino-acid sequence, 469 residues long: Putative dipeptidase MW1694 (469 aa).

Zn(2+) is bound at residue His-84. Asp-86 is an active-site residue. Asp-115 lines the Zn(2+) pocket. Residue Glu-149 is the Proton acceptor of the active site. Residues Glu-150, Asp-173, and His-440 each coordinate Zn(2+).

It belongs to the peptidase M20A family. It depends on Zn(2+) as a cofactor.

This chain is Putative dipeptidase MW1694, found in Staphylococcus aureus (strain MW2).